The following is a 964-amino-acid chain: Vitamin B12-dependent ribonucleotide reductase (964 aa).

The disordered stretch occupies residues 1-21; the sequence is MTETASGPARGSRAKGTKAKG. Residues 12–21 are compositionally biased toward basic residues; the sequence is SRAKGTKAKG. Substrate-binding positions include Ser142, 158 to 159, Gly187, 363 to 367, and 553 to 557; these read AC, NPCSE, and PTGTI. Cysteines 159 and 376 form a disulfide. The active-site Proton acceptor is the Asn363. The active-site Cysteine radical intermediate is Cys365. Residue Glu367 is the Proton acceptor of the active site.

This sequence belongs to the ribonucleoside diphosphate reductase class-2 family. Adenosylcob(III)alamin serves as cofactor.

It carries out the reaction a 2'-deoxyribonucleoside 5'-diphosphate + [thioredoxin]-disulfide + H2O = a ribonucleoside 5'-diphosphate + [thioredoxin]-dithiol. Its function is as follows. Catalyzes the reduction of ribonucleotides to deoxyribonucleotides. May function to provide a pool of deoxyribonucleotide precursors for DNA repair during oxygen limitation and/or for immediate growth after restoration of oxygen. The polypeptide is Vitamin B12-dependent ribonucleotide reductase (nrdJ) (Streptomyces avermitilis (strain ATCC 31267 / DSM 46492 / JCM 5070 / NBRC 14893 / NCIMB 12804 / NRRL 8165 / MA-4680)).